The sequence spans 580 residues: mRNA cap guanine-N(7) methyltransferase (580 aa).

2 stretches are compositionally biased toward polar residues: residues 1 to 17 (MSGSKQGSEKASITSLI) and 25 to 53 (EATSVSTQNQSPKTQITQTENVEVQNSDL). Residues 1–222 (MSGSKQGSEK…PVEAQPYSRL (222 aa)) are disordered. Basic and acidic residues predominate over residues 54 to 67 (KVTENKPKNTEMKP). Positions 69–90 (DPNTNASTTENTPITTSNAQVS) are enriched in polar residues. Basic and acidic residues predominate over residues 102-154 (REPEEAQNRYDRYVPRVDNRRRGEPRVAEVRQDPRYAKYLRQDQEERRIRRPD). Acidic residues predominate over residues 191–214 (ESEENGDEQQGDDEEETPGNEEPV). Residues 271-579 (SPIYKLRNFN…FYLGFAFEKL (309 aa)) form the mRNA cap 0 methyltransferase domain. 280 to 281 (NN) provides a ligand contact to mRNA. S-adenosyl-L-methionine-binding residues include Lys-284, Cys-308, Asp-330, Asp-376, Gln-406, and Tyr-411.

This sequence belongs to the class I-like SAM-binding methyltransferase superfamily. mRNA cap 0 methyltransferase family.

It is found in the nucleus. The enzyme catalyses a 5'-end (5'-triphosphoguanosine)-ribonucleoside in mRNA + S-adenosyl-L-methionine = a 5'-end (N(7)-methyl 5'-triphosphoguanosine)-ribonucleoside in mRNA + S-adenosyl-L-homocysteine. Functionally, responsible for methylating the 5'-cap structure of mRNAs. The polypeptide is mRNA cap guanine-N(7) methyltransferase (ABD1) (Meyerozyma guilliermondii (strain ATCC 6260 / CBS 566 / DSM 6381 / JCM 1539 / NBRC 10279 / NRRL Y-324) (Yeast)).